A 67-amino-acid chain; its full sequence is Large ribosomal subunit protein uL29 (67 aa).

This sequence belongs to the universal ribosomal protein uL29 family.

This Halorhodospira halophila (strain DSM 244 / SL1) (Ectothiorhodospira halophila (strain DSM 244 / SL1)) protein is Large ribosomal subunit protein uL29.